We begin with the raw amino-acid sequence, 462 residues long: Anthranilate synthase component 1 (462 aa).

Residues S37 and 244–246 (PYM) contribute to the L-tryptophan site. 279–280 (GT) provides a ligand contact to chorismate. E306 lines the Mg(2+) pocket. Residues Y394, R414, 428–430 (GAG), and G430 contribute to the chorismate site. Residue E443 participates in Mg(2+) binding.

Belongs to the anthranilate synthase component I family. Heterotetramer consisting of two non-identical subunits: a beta subunit (TrpG) and a large alpha subunit (TrpE). Requires Mg(2+) as cofactor.

The catalysed reaction is chorismate + L-glutamine = anthranilate + pyruvate + L-glutamate + H(+). It functions in the pathway amino-acid biosynthesis; L-tryptophan biosynthesis; L-tryptophan from chorismate: step 1/5. Feedback inhibited by tryptophan. Part of a heterotetrameric complex that catalyzes the two-step biosynthesis of anthranilate, an intermediate in the biosynthesis of L-tryptophan. In the first step, the glutamine-binding beta subunit (TrpG) of anthranilate synthase (AS) provides the glutamine amidotransferase activity which generates ammonia as a substrate that, along with chorismate, is used in the second step, catalyzed by the large alpha subunit of AS (TrpE) to produce anthranilate. In the absence of TrpG, TrpE can synthesize anthranilate directly from chorismate and high concentrations of ammonia. The polypeptide is Anthranilate synthase component 1 (trpE) (Thermus thermophilus (strain ATCC 27634 / DSM 579 / HB8)).